We begin with the raw amino-acid sequence, 250 residues long: PF03932 family protein CutC (250 aa).

Belongs to the CutC family.

It is found in the cytoplasm. This Vibrio vulnificus (strain YJ016) protein is PF03932 family protein CutC.